Reading from the N-terminus, the 273-residue chain is Rhamnulose-1-phosphate aldolase (273 aa).

Residue E117 is part of the active site. H140, H142, and H211 together coordinate Zn(2+).

It belongs to the aldolase class II family. RhaD subfamily. It depends on Zn(2+) as a cofactor.

It localises to the cytoplasm. It catalyses the reaction L-rhamnulose 1-phosphate = (S)-lactaldehyde + dihydroxyacetone phosphate. It functions in the pathway carbohydrate degradation; L-rhamnose degradation; glycerone phosphate from L-rhamnose: step 3/3. Catalyzes the reversible cleavage of L-rhamnulose-1-phosphate to dihydroxyacetone phosphate (DHAP) and L-lactaldehyde. This is Rhamnulose-1-phosphate aldolase from Listeria monocytogenes serotype 4b (strain F2365).